The sequence spans 439 residues: Enolase 1-1 (439 aa).

At T85 the chain carries Phosphothreonine. Residues H159 and E168 each coordinate substrate. E211 functions as the Proton donor in the catalytic mechanism. A Mg(2+)-binding site is contributed by D246. 2 positions are modified to phosphoserine: S249 and S250. The residue at position 253 (Y253) is a Phosphotyrosine. 2 residues coordinate substrate: E295 and D320. Mg(2+) is bound by residues E295 and D320. K345 (proton acceptor) is an active-site residue. Phosphoserine is present on S351. Residue T353 is modified to Phosphothreonine. S355 is subject to Phosphoserine. Substrate-binding positions include 372–375 (SHRS) and K396. S421 bears the Phosphoserine mark.

The protein belongs to the enolase family. Homodimer. Mg(2+) is required as a cofactor.

It is found in the cytoplasm. The catalysed reaction is (2R)-2-phosphoglycerate = phosphoenolpyruvate + H2O. The protein operates within carbohydrate degradation; glycolysis; pyruvate from D-glyceraldehyde 3-phosphate: step 4/5. The protein is Enolase 1-1 (eno101) of Schizosaccharomyces pombe (strain 972 / ATCC 24843) (Fission yeast).